Here is a 416-residue protein sequence, read N- to C-terminus: 4-hydroxy-3-methylbut-2-en-1-yl diphosphate synthase (flavodoxin) (416 aa).

Positions 304, 307, 350, and 357 each coordinate [4Fe-4S] cluster.

It belongs to the IspG family. The cofactor is [4Fe-4S] cluster.

The catalysed reaction is (2E)-4-hydroxy-3-methylbut-2-enyl diphosphate + oxidized [flavodoxin] + H2O + 2 H(+) = 2-C-methyl-D-erythritol 2,4-cyclic diphosphate + reduced [flavodoxin]. It functions in the pathway isoprenoid biosynthesis; isopentenyl diphosphate biosynthesis via DXP pathway; isopentenyl diphosphate from 1-deoxy-D-xylulose 5-phosphate: step 5/6. Its function is as follows. Converts 2C-methyl-D-erythritol 2,4-cyclodiphosphate (ME-2,4cPP) into 1-hydroxy-2-methyl-2-(E)-butenyl 4-diphosphate. The polypeptide is 4-hydroxy-3-methylbut-2-en-1-yl diphosphate synthase (flavodoxin) (Rhizobium etli (strain ATCC 51251 / DSM 11541 / JCM 21823 / NBRC 15573 / CFN 42)).